The sequence spans 290 residues: Probable porphobilinogen deaminase (290 aa).

At C230 the chain carries S-(dipyrrolylmethanemethyl)cysteine.

It belongs to the HMBS family. Dipyrromethane is required as a cofactor.

It carries out the reaction 4 porphobilinogen + H2O = hydroxymethylbilane + 4 NH4(+). The protein operates within porphyrin-containing compound metabolism; protoporphyrin-IX biosynthesis; coproporphyrinogen-III from 5-aminolevulinate: step 2/4. Its function is as follows. Tetrapolymerization of the monopyrrole PBG into the hydroxymethylbilane pre-uroporphyrinogen in several discrete steps. The polypeptide is Probable porphobilinogen deaminase (Metallosphaera sedula (strain ATCC 51363 / DSM 5348 / JCM 9185 / NBRC 15509 / TH2)).